Here is a 1206-residue protein sequence, read N- to C-terminus: DNA-directed RNA polymerase subunit beta' (1206 aa).

Residues Cys60, Cys62, Cys75, and Cys78 each contribute to the Zn(2+) site. Mg(2+)-binding residues include Asp449, Asp451, and Asp453. The Zn(2+) site is built by Cys818, Cys892, Cys899, and Cys902.

The protein belongs to the RNA polymerase beta' chain family. The RNAP catalytic core consists of 2 alpha, 1 beta, 1 beta' and 1 omega subunit. When a sigma factor is associated with the core the holoenzyme is formed, which can initiate transcription. It depends on Mg(2+) as a cofactor. Zn(2+) serves as cofactor.

It carries out the reaction RNA(n) + a ribonucleoside 5'-triphosphate = RNA(n+1) + diphosphate. Functionally, DNA-dependent RNA polymerase catalyzes the transcription of DNA into RNA using the four ribonucleoside triphosphates as substrates. This is DNA-directed RNA polymerase subunit beta' from Shouchella clausii (strain KSM-K16) (Alkalihalobacillus clausii).